A 161-amino-acid chain; its full sequence is MSIVTKSIVNADAEARYLSPGELDRIKAFVTSGESRLRIAETLTGSRERIIKSAGDALFQKRPDVVSPGGNAYGEEMTATCLRDMDYYLRLITYGVVAGDVTPIEEIGLVGVREMYKSLGTPVDAVAQAVREMKAVATGMMSGDDAAEAGAYFDYVIGAME.

A (2R,3E)-phycocyanobilin-binding site is contributed by C81.

Belongs to the phycobiliprotein family. In terms of assembly, heterodimer of an alpha and a beta chain. In terms of processing, contains one covalently linked phycocyanobilin chromophore. The chromophore on position 81 is added by the phycocyanobilin lyase CpcUS.

It localises to the cellular thylakoid membrane. Light-harvesting photosynthetic bile pigment-protein from the phycobiliprotein complex. Allophycocyanin has a maximum absorption at approximately 650 nanometers. In Picosynechococcus sp. (strain ATCC 27264 / PCC 7002 / PR-6) (Agmenellum quadruplicatum), this protein is Allophycocyanin alpha subunit (apcA).